The chain runs to 90 residues: Large ribosomal subunit protein bL27 (90 aa).

Residues 1-21 (MASKKAGGSTRNGRDSEAKRL) form a disordered region.

This sequence belongs to the bacterial ribosomal protein bL27 family.

This Neisseria meningitidis serogroup C (strain 053442) protein is Large ribosomal subunit protein bL27.